A 452-amino-acid polypeptide reads, in one-letter code: Eukaryotic translation initiation factor 3 subunit E (452 aa).

One can recognise a PCI domain in the interval 257–426 (TDLFFSPAYI…GTVIMNHPPQ (170 aa)).

Belongs to the eIF-3 subunit E family. Component of the eukaryotic translation initiation factor 3 (eIF-3) complex.

The protein localises to the cytoplasm. Component of the eukaryotic translation initiation factor 3 (eIF-3) complex, which is involved in protein synthesis of a specialized repertoire of mRNAs and, together with other initiation factors, stimulates binding of mRNA and methionyl-tRNAi to the 40S ribosome. The eIF-3 complex specifically targets and initiates translation of a subset of mRNAs involved in cell proliferation. The protein is Eukaryotic translation initiation factor 3 subunit E (int6) of Aspergillus niger (strain ATCC MYA-4892 / CBS 513.88 / FGSC A1513).